The primary structure comprises 79 residues: Small ribosomal subunit protein bS18 (79 aa).

This sequence belongs to the bacterial ribosomal protein bS18 family. In terms of assembly, part of the 30S ribosomal subunit. Forms a tight heterodimer with protein bS6.

Binds as a heterodimer with protein bS6 to the central domain of the 16S rRNA, where it helps stabilize the platform of the 30S subunit. The protein is Small ribosomal subunit protein bS18 of Blochmanniella pennsylvanica (strain BPEN).